The following is a 395-amino-acid chain: 8-amino-7-oxononanoate synthase (395 aa).

Residue Lys-24 coordinates substrate. Pyridoxal 5'-phosphate is bound at residue 111 to 112 (GF). His-136 lines the substrate pocket. Pyridoxal 5'-phosphate-binding positions include Ser-184, 209–212 (DDAH), and 240–243 (TLSK). Lys-243 carries the N6-(pyridoxal phosphate)lysine modification. Position 357 (Thr-357) interacts with substrate.

This sequence belongs to the class-II pyridoxal-phosphate-dependent aminotransferase family. BioF subfamily. In terms of assembly, homodimer. The cofactor is pyridoxal 5'-phosphate.

It catalyses the reaction 6-carboxyhexanoyl-[ACP] + L-alanine + H(+) = (8S)-8-amino-7-oxononanoate + holo-[ACP] + CO2. The protein operates within cofactor biosynthesis; biotin biosynthesis. Catalyzes the decarboxylative condensation of pimeloyl-[acyl-carrier protein] and L-alanine to produce 8-amino-7-oxononanoate (AON), [acyl-carrier protein], and carbon dioxide. This is 8-amino-7-oxononanoate synthase from Treponema denticola (strain ATCC 35405 / DSM 14222 / CIP 103919 / JCM 8153 / KCTC 15104).